A 141-amino-acid polypeptide reads, in one-letter code: Nucleoside diphosphate kinase (141 aa).

ATP-binding residues include Lys-10, Phe-58, Arg-86, Thr-92, Arg-103, and Asn-113. His-116 functions as the Pros-phosphohistidine intermediate in the catalytic mechanism.

The protein belongs to the NDK family. As to quaternary structure, homotetramer. It depends on Mg(2+) as a cofactor.

The protein localises to the cytoplasm. The enzyme catalyses a 2'-deoxyribonucleoside 5'-diphosphate + ATP = a 2'-deoxyribonucleoside 5'-triphosphate + ADP. It catalyses the reaction a ribonucleoside 5'-diphosphate + ATP = a ribonucleoside 5'-triphosphate + ADP. Major role in the synthesis of nucleoside triphosphates other than ATP. The ATP gamma phosphate is transferred to the NDP beta phosphate via a ping-pong mechanism, using a phosphorylated active-site intermediate. In Ehrlichia canis (strain Jake), this protein is Nucleoside diphosphate kinase.